The primary structure comprises 698 residues: Serotransferrin (698 aa).

The first 19 residues, 1–19 (MRFAVGALLACAALGLCLA), serve as a signal peptide directing secretion. Transferrin-like domains are found at residues 25-347 (VKWC…NQRE) and 360-683 (VKWC…NIRK). 2 disulfides stabilise this stretch: Cys28/Cys67 and Cys38/Cys58. Residue Arg42 is modified to Dimethylated arginine. Residues Asp82 and Tyr114 each contribute to the Fe(3+) site. Disulfide bonds link Cys137-Cys213, Cys156-Cys350, Cys177-Cys193, Cys180-Cys196, Cys190-Cys198, Cys246-Cys260, Cys363-Cys395, and Cys373-Cys386. Residues Thr139, Arg143, Ala145, and Gly146 each coordinate hydrogencarbonate. A Fe(3+)-binding site is contributed by Tyr207. His268 is a binding site for Fe(3+). Ser388 is subject to Phosphoserine. 2 residues coordinate Fe(3+): Asp410 and Tyr447. Cystine bridges form between Cys420–Cys693, Cys435–Cys656, Cys471–Cys542, Cys495–Cys684, Cys505–Cys519, Cys516–Cys525, Cys582–Cys596, and Cys634–Cys639. Residues Thr473, Arg477, Ala479, and Gly480 each contribute to the hydrogencarbonate site. The N-linked (GlcNAc...) asparagine glycan is linked to Asn512. Tyr536 contributes to the Fe(3+) binding site. Residue His604 coordinates Fe(3+). Ser685 carries the post-translational modification Phosphoserine.

Belongs to the transferrin family. In terms of assembly, monomer. Part of a complex composed of SLC40A1/ferroportin, TF/transferrin and HEPH/hephaestin that transfers iron from cells to transferrin. Expressed by the liver and secreted in plasma.

It localises to the secreted. Its function is as follows. Transferrins are iron binding transport proteins which can bind two Fe(3+) ions in association with the binding of an anion, usually bicarbonate. It is responsible for the transport of iron from sites of absorption and heme degradation to those of storage and utilization. Serum transferrin may also have a further role in stimulating cell proliferation. This Rattus norvegicus (Rat) protein is Serotransferrin (Tf).